The following is a 288-amino-acid chain: Extracellular ribonuclease (288 aa).

The first 26 residues, 1–26 (MTKKAWFLPLVCVLLISGWLAPAASA), serve as a signal peptide directing secretion.

It is found in the secreted. Its function is as follows. Mg(2+)-activated ribonuclease which hydrolyzes RNA apparently nonspecifically into oligonucleotides with 5'-terminal phosphate. This is Extracellular ribonuclease (bsn) from Bacillus subtilis (strain 168).